A 351-amino-acid polypeptide reads, in one-letter code: Probable dual-specificity RNA methyltransferase RlmN (351 aa).

Residue Glu-92 is the Proton acceptor of the active site. The region spanning Thr-98 to Asp-332 is the Radical SAM core domain. Cysteines 105 and 337 form a disulfide. [4Fe-4S] cluster is bound by residues Cys-112, Cys-116, and Cys-119. S-adenosyl-L-methionine-binding positions include Gly-159–Glu-160, Ser-189, Ser-218–His-220, and Asn-294. Cys-337 serves as the catalytic S-methylcysteine intermediate.

The protein belongs to the radical SAM superfamily. RlmN family. [4Fe-4S] cluster serves as cofactor.

Its subcellular location is the cytoplasm. It catalyses the reaction adenosine(2503) in 23S rRNA + 2 reduced [2Fe-2S]-[ferredoxin] + 2 S-adenosyl-L-methionine = 2-methyladenosine(2503) in 23S rRNA + 5'-deoxyadenosine + L-methionine + 2 oxidized [2Fe-2S]-[ferredoxin] + S-adenosyl-L-homocysteine. The enzyme catalyses adenosine(37) in tRNA + 2 reduced [2Fe-2S]-[ferredoxin] + 2 S-adenosyl-L-methionine = 2-methyladenosine(37) in tRNA + 5'-deoxyadenosine + L-methionine + 2 oxidized [2Fe-2S]-[ferredoxin] + S-adenosyl-L-homocysteine. Functionally, specifically methylates position 2 of adenine 2503 in 23S rRNA and position 2 of adenine 37 in tRNAs. This is Probable dual-specificity RNA methyltransferase RlmN from Synechococcus sp. (strain CC9902).